The primary structure comprises 319 residues: Thioredoxin reductase 1 (319 aa).

FAD contacts are provided by residues Ser11 to Ala14, Ile40 to Ala41, Gln45, Asn54, Val87, Cys145, Asp288, and Arg295 to Ala297. The cysteines at positions 142 and 145 are disulfide-linked. Phosphoserine is present on Ser303.

The protein belongs to the class-II pyridine nucleotide-disulfide oxidoreductase family. In terms of assembly, homodimer. The cofactor is FAD.

It is found in the cytoplasm. Its subcellular location is the mitochondrion intermembrane space. The catalysed reaction is [thioredoxin]-dithiol + NADP(+) = [thioredoxin]-disulfide + NADPH + H(+). Its function is as follows. Central component in the thioredoxin system. Reduces thioredoxins 1 and 2. This chain is Thioredoxin reductase 1 (TRR1), found in Saccharomyces cerevisiae (strain ATCC 204508 / S288c) (Baker's yeast).